Consider the following 213-residue polypeptide: MDSAQIQKAVKEARTLAKPRNFTQSVDLIVNLKELDLTRPENRLKEQIVLPSGKGKDTKIAVIAKGDLAAQAAEMGLTVIRQEELEELGKNKKAAKRIANEHGFFIAQADMMPLVGKSLGPVLGPRGKMPQPVPGNANLAPLVARFKKTVAINTRDKSLFQVYIGTEAMSDEEIAANAEAILNVVAKKYEKGLYHVKSAFTKLTMGAAAPISK.

The protein belongs to the universal ribosomal protein uL1 family. As to quaternary structure, part of the 50S ribosomal subunit.

Its function is as follows. Probably involved in E site tRNA release. Binds directly to 23S rRNA. Protein L1 is also a translational repressor protein, it controls the translation of the L1 operon by binding to its mRNA. Thus it also controls transcription of L10 and L12 by translational coupling. Unlike the case in E.coli, where the site is in the untranslated mRNA leader, this site is within the L1 protein's structural gene. The polypeptide is Large ribosomal subunit protein uL1 (Methanococcus vannielii (strain ATCC 35089 / DSM 1224 / JCM 13029 / OCM 148 / SB)).